Reading from the N-terminus, the 302-residue chain is MATETDLEELRRGSELVKRGFAKMQKGGVIMDVVNREQARIAEDVGAVAVMNLEAVPADIRKRGGVARMADPASLTGIIEEVSIPVMGKSRIGHRKEAEILQAVGADMIDESEVLTPADDEYHIDKREFTAPFVCGARNLGEALRRIDEGAAMIRTKGEAGTGDVNQAVHHQRNIKSAIRKLEGMDYEERDMWARDHEAPRELVHETAEMGRLPVVNFAAGGIATPADAALMMHHGCDGIFVGSGIFGAENPEAMGRAVVDAVNNHDDPERLAEIASNIGEGMQGDPNADLPEDERMQDRGN.

Asp32 contributes to the D-ribose 5-phosphate binding site. The active-site Schiff-base intermediate with D-ribose 5-phosphate is the Lys89. D-ribose 5-phosphate is bound at residue Gly161. Residue Arg173 coordinates D-glyceraldehyde 3-phosphate. Residues Gly222 and 243-244 contribute to the D-ribose 5-phosphate site; that span reads GS. Positions 276–302 are disordered; it reads ASNIGEGMQGDPNADLPEDERMQDRGN.

It belongs to the PdxS/SNZ family. In terms of assembly, in the presence of PdxT, forms a dodecamer of heterodimers.

It carries out the reaction aldehydo-D-ribose 5-phosphate + D-glyceraldehyde 3-phosphate + L-glutamine = pyridoxal 5'-phosphate + L-glutamate + phosphate + 3 H2O + H(+). Its pathway is cofactor biosynthesis; pyridoxal 5'-phosphate biosynthesis. Its function is as follows. Catalyzes the formation of pyridoxal 5'-phosphate from ribose 5-phosphate (RBP), glyceraldehyde 3-phosphate (G3P) and ammonia. The ammonia is provided by the PdxT subunit. Can also use ribulose 5-phosphate and dihydroxyacetone phosphate as substrates, resulting from enzyme-catalyzed isomerization of RBP and G3P, respectively. In Halobacterium salinarum (strain ATCC 29341 / DSM 671 / R1), this protein is Pyridoxal 5'-phosphate synthase subunit PdxS.